Here is a 114-residue protein sequence, read N- to C-terminus: UPF0342 protein LSL_0473 (114 aa).

It belongs to the UPF0342 family.

This is UPF0342 protein LSL_0473 from Ligilactobacillus salivarius (strain UCC118) (Lactobacillus salivarius).